The sequence spans 81 residues: Small cysteine-rich protein 1 2 (81 aa).

A signal peptide spans 1-19 (MGVNFNICLLLLLVATISS). A propeptide spanning residues 20 to 39 (QPLKATEKDDSTDENPFGIY) is cleaved from the precursor.

The protein belongs to the Cnidaria small cysteine-rich protein (SCRiP) family. alpha subfamily. The basic myotoxic domain of rattlesnake crotamine toxins (with 6 Cys residues) has been detected in this protein. However, this protein contains 2 additional Cys at the C-terminal region. Hence, this protein may contain 4 disulfide bonds instead of the 3 suggested by the myotoxin domain.

It is found in the secreted. The protein localises to the nematocyst. Its function is as follows. Induces neurotoxic symptoms on zebrafish. Has also been claimed to be implied in calcification, but tests on homolog proteins suggest that proteins of this family have a neurotoxic function and not a calcification function. The protein is Small cysteine-rich protein 1 2 of Montipora capitata (Rice coral).